Consider the following 307-residue polypeptide: MMPEYHQSVMFNESMYALNIKTDGIYIDATFGRGGHAQGILNRLSKKGRLIAFDQDINAIEYANKNLVDNRLTLIHSAFSKMLSIITKQGLIGRIDGILIDLGVSSPQLENAQRGFSFRVDGPLDMRMNQTTGMSATQWLKSANEEEIANVIYQFSNEKKSRHIANKIKKYQKNHVLETTLELANIVSKVVKKQKNKHPATRTFQAIRIFINQELKQLISVLEQSKDILSKNGRLSIISFHSIEDRIVKRFIQKNSRQKTLPKGLPIIENEIEKTYLKDLGKYLTSKAEIDNNKRARSAILRVASKN.

S-adenosyl-L-methionine-binding positions include 34-36 (GGH), aspartate 54, phenylalanine 79, aspartate 101, and glutamine 108.

The protein belongs to the methyltransferase superfamily. RsmH family.

Its subcellular location is the cytoplasm. The catalysed reaction is cytidine(1402) in 16S rRNA + S-adenosyl-L-methionine = N(4)-methylcytidine(1402) in 16S rRNA + S-adenosyl-L-homocysteine + H(+). Functionally, specifically methylates the N4 position of cytidine in position 1402 (C1402) of 16S rRNA. In Vesicomyosocius okutanii subsp. Calyptogena okutanii (strain HA), this protein is Ribosomal RNA small subunit methyltransferase H.